The following is a 433-amino-acid chain: Oxaloacetate decarboxylase beta chain 2 (433 aa).

9 consecutive transmembrane segments (helical) span residues 13 to 35, 42 to 64, 125 to 147, 160 to 182, 214 to 236, 266 to 288, 308 to 327, 339 to 361, and 413 to 432; these read LMHLGAGQAIMLLVSLLLLWLAI, LLLLPIGFGGLLSNIPEAGLALT, LFYKVAIGSGVAPLVIFMGVGAM, LLLGAAAQFGIFATVLGALTLNY, LAPELLGAIAVAAYSYMALVPLI, ILFPVVLLMLVALLLPDAAPLLG, TVQNGLINIVTIFLGLSVGA, TLGILLLGVIAFGIGTAAGVLMA, and VAGVIGSAIAAGVMLKYVLA.

It belongs to the GcdB/MmdB/OadB family. As to quaternary structure, heterotrimer of an alpha, a beta and a gamma subunit. Requires Na(+) as cofactor.

The protein resides in the cell membrane. It carries out the reaction oxaloacetate + 2 Na(+)(in) + H(+) = pyruvate + 2 Na(+)(out) + CO2. Functionally, catalyzes the decarboxylation of oxaloacetate coupled to Na(+) translocation. The protein is Oxaloacetate decarboxylase beta chain 2 (oadB2) of Salmonella typhimurium (strain LT2 / SGSC1412 / ATCC 700720).